We begin with the raw amino-acid sequence, 406 residues long: Odorant receptor 10a (406 aa).

Residues 1-45 (MSEWLRFLKRDQQLDVYFFAVPRLSLDIMGYWPGKTGDTWPWRSL) lie on the Cytoplasmic side of the membrane. Residues 46-66 (IHFAILAIGVATELHAGMCFL) traverse the membrane as a helical segment. Topologically, residues 67–74 (DRQQITLA) are extracellular. The chain crosses the membrane as a helical span at residues 75-95 (LETLCPAGTSAVTLLKMFLML). Over 96–143 (RFRQDLSIMWNRLRGLLFDPNWERPEQRDIRLKHSAMAARINFWPLSA) the chain is Cytoplasmic. A helical transmembrane segment spans residues 144-164 (GFFTCTTYNLKPILIAMILYL). The Extracellular segment spans residues 165–189 (QNRYEDFVWFTPFNMTMPKVLLNYP). An N-linked (GlcNAc...) asparagine glycan is attached at Asn178. Residues 190–210 (FFPLTYIFIAYTGYVTIFMFG) traverse the membrane as a helical segment. Residues 211 to 281 (GCDGFYFEFC…LTRFFRDRYT (71 aa)) are Cytoplasmic-facing. A helical membrane pass occupies residues 282 to 302 (IITLAHFVSAAMVIGFSMVNL). Topologically, residues 303 to 308 (LTLGNN) are extracellular. The chain crosses the membrane as a helical span at residues 309-329 (GLGAMLYVAYTVAALSQLLVY). The Cytoplasmic portion of the chain corresponds to 330–372 (CYGGTLVAESSTGLCRAMFSCPWQLFKPKQRRLVQLLILRSQR). A helical transmembrane segment spans residues 373–393 (PVSMAVPFFSPSLATFAAILQ). The Extracellular portion of the chain corresponds to 394–406 (TSGSIIALVKSFQ).

Belongs to the insect chemoreceptor superfamily. Heteromeric odorant receptor channel (TC 1.A.69) family. Or1a subfamily. As to quaternary structure, interacts with Orco. Complexes exist early in the endomembrane system in olfactory sensory neurons (OSNs), coupling these complexes to the conserved ciliary trafficking pathway. In terms of tissue distribution, expressed in olfactory sensory neurons in the antenna.

The protein resides in the cell membrane. Odorant receptor which mediates acceptance or avoidance behavior, depending on its substrates. The odorant receptor repertoire encodes a large collection of odor stimuli that vary widely in identity, intensity, and duration. May form a complex with Orco to form odorant-sensing units, providing sensitive and prolonged odorant signaling and calcium permeability. Involved in the behavioral responses to esters, and specifically to ethyl hexanoate, benzaldehyde, and acetophenone. The chain is Odorant receptor 10a (Or10a) from Drosophila melanogaster (Fruit fly).